The following is a 230-amino-acid chain: Protein RESPONSE TO ABA AND SALT 1 (230 aa).

A DOG1 domain is found at 7 to 230; it reads SQSFTIFVDG…RLRDRDQERA (224 aa).

Its function is as follows. Negative regulator of salt (NaCl) tolerance probably by enhancing abscisic acid (ABA) sensitivity. This Arabidopsis thaliana (Mouse-ear cress) protein is Protein RESPONSE TO ABA AND SALT 1.